Here is a 727-residue protein sequence, read N- to C-terminus: Broad-complex core protein isoforms 1/2/3/4/5 (727 aa).

The BTB domain occupies 32 to 97 (VDVTLACEGR…IYHGEVNVHQ (66 aa)). Positions 135–149 (NSGGRTPLNTHTQSL) are enriched in polar residues. Disordered regions lie at residues 135–185 (NSGG…SLPS), 218–378 (RGSD…IGDG), 445–496 (INNS…RPTA), 532–583 (PQQQ…ANTP), and 604–626 (STSG…SGGL). A compositionally biased stretch (low complexity) spans 227–238 (SGAVGSGSNNNS). A compositionally biased stretch (gly residues) spans 281-298 (TGNGNSGNGNGNGNGASN). Positions 341–355 (NDEHSNDSTGEHDAN) are enriched in basic and acidic residues. 3 stretches are compositionally biased toward low complexity: residues 445-460 (INNS…NNNN), 475-495 (TPSP…TRPT), and 533-568 (QQQQ…QQQQ). C2H2-type zinc fingers lie at residues 636–659 (FRCN…QNVH) and 666–689 (PVCN…SIYH). Residues 694-727 (QPKQEPGVGATQAAANSFYHQQHQQQQLNHHSSS) are disordered. The segment covering 713-727 (HQQHQQQQLNHHSSS) has biased composition (low complexity).

It is found in the nucleus. In terms of biological role, broad-complex proteins are required for puffing and transcription of salivary gland late genes during metamorphosis. This is Broad-complex core protein isoforms 1/2/3/4/5 (br) from Drosophila melanogaster (Fruit fly).